A 154-amino-acid polypeptide reads, in one-letter code: Myoglobin (154 aa).

The region spanning 2 to 148 (GLSDGEWQLV…FRNDMAAQYK (147 aa)) is the Globin domain. At S4 the chain carries Phosphoserine. H65 provides a ligand contact to nitrite. O2 is bound at residue H65. T68 is modified (phosphothreonine). H94 contributes to the heme b binding site.

Monomer.

The protein localises to the cytoplasm. The protein resides in the sarcoplasm. It carries out the reaction Fe(III)-heme b-[protein] + nitric oxide + H2O = Fe(II)-heme b-[protein] + nitrite + 2 H(+). The catalysed reaction is H2O2 + AH2 = A + 2 H2O. Monomeric heme protein which primary function is to store oxygen and facilitate its diffusion within muscle tissues. Reversibly binds oxygen through a pentacoordinated heme iron and enables its timely and efficient release as needed during periods of heightened demand. Depending on the oxidative conditions of tissues and cells, and in addition to its ability to bind oxygen, it also has a nitrite reductase activity whereby it regulates the production of bioactive nitric oxide. Under stress conditions, like hypoxia and anoxia, it also protects cells against reactive oxygen species thanks to its pseudoperoxidase activity. This is Myoglobin from Rangifer tarandus (Reindeer).